The following is a 115-amino-acid chain: Large ribosomal subunit protein bL19 (115 aa).

It belongs to the bacterial ribosomal protein bL19 family.

Functionally, this protein is located at the 30S-50S ribosomal subunit interface and may play a role in the structure and function of the aminoacyl-tRNA binding site. The protein is Large ribosomal subunit protein bL19 of Escherichia coli O139:H28 (strain E24377A / ETEC).